Reading from the N-terminus, the 128-residue chain is Lutropin subunit beta (128 aa).

The N-terminal stretch at 1–20 is a signal peptide; the sequence is MERLQGLLLWLLLSPSVVWA. 5 cysteine pairs are disulfide-bonded: Cys-29-Cys-77, Cys-43-Cys-92, Cys-54-Cys-108, Cys-58-Cys-110, and Cys-113-Cys-120. N-linked (GlcNAc...) asparagine glycosylation occurs at Asn-33.

Belongs to the glycoprotein hormones subunit beta family. In terms of assembly, heterodimer of a common alpha chain and a unique beta chain which confers biological specificity to thyrotropin, lutropin, follitropin and gonadotropin.

Its subcellular location is the secreted. Its function is as follows. Promotes spermatogenesis and ovulation by stimulating the testes and ovaries to synthesize steroids. The protein is Lutropin subunit beta (LHB) of Phodopus sungorus (Striped hairy-footed hamster).